A 229-amino-acid chain; its full sequence is Prolactin (229 aa).

The N-terminal stretch at 1-30 (MDSKVSSQKGSRLLLLLVVSNLLLCQGVVS) is a signal peptide. Residues Cys-34 and Cys-41 are joined by a disulfide bond. 3 positions are modified to phosphoserine: Ser-56, Ser-64, and Ser-120. 2 disulfide bridges follow: Cys-88–Cys-204 and Cys-221–Cys-229.

It belongs to the somatotropin/prolactin family. As to quaternary structure, interacts with PRLR.

It localises to the secreted. Prolactin acts primarily on the mammary gland by promoting lactation. The sequence is that of Prolactin (PRL) from Cervus elaphus (Red deer).